The following is a 46-amino-acid chain: MNNTIKDFDLDLKTNKKDTATPYVGSRYLCTPGSCWKLVCFTTTVK.

A propeptide spanning residues 1 to 24 (MNNTIKDFDLDLKTNKKDTATPYV) is cleaved from the precursor.

This sequence belongs to the type A lantibiotic family. Post-translationally, maturation of lantibiotics involves the enzymatic conversion of Thr, and Ser into dehydrated AA and the formation of thioether bonds with cysteine. This is followed by membrane translocation and cleavage of the modified precursor.

Lanthionine-containing peptide antibiotic (lantibiotic) active on certain Gram-positive bacteria. The bactericidal activity of lantibiotics is based on depolarization of energized bacterial cytoplasmic membranes, initiated by the formation of aqueous transmembrane pores. The polypeptide is Lantibiotic streptin (srtA) (Streptococcus pyogenes serotype M1).